Here is a 143-residue protein sequence, read N- to C-terminus: MKLNTLAPAAGSKSAPKRLGRGIGSGLGKTSGKGHKGQKARSGGYHKVGFEGGQMPLQRRLPKFGFTSASKRHVAEIRLHELNNLVADEVTLDTLKDFGLIRKDIKTVKVIASGEIQKAVSLKGIACTKGAKEAIEKAGGKVE.

Residues 1–52 are disordered; the sequence is MKLNTLAPAAGSKSAPKRLGRGIGSGLGKTSGKGHKGQKARSGGYHKVGFEG. A compositionally biased stretch (gly residues) spans 21–31; the sequence is RGIGSGLGKTS.

This sequence belongs to the universal ribosomal protein uL15 family. Part of the 50S ribosomal subunit.

Functionally, binds to the 23S rRNA. This chain is Large ribosomal subunit protein uL15, found in Francisella tularensis subsp. mediasiatica (strain FSC147).